The following is a 268-amino-acid chain: Taurine import ATP-binding protein TauB (268 aa).

The region spanning 4–236 (LAIRNISMRF…EGVDADLREV (233 aa)) is the ABC transporter domain. Position 41 to 48 (41 to 48 (GPSGCGKT)) interacts with ATP.

Belongs to the ABC transporter superfamily. Taurine importer (TC 3.A.1.17.1) family. As to quaternary structure, the complex is composed of two ATP-binding proteins (TauB), two transmembrane proteins (TauC) and a solute-binding protein (TauA).

The protein localises to the cell inner membrane. The catalysed reaction is taurine(out) + ATP + H2O = taurine(in) + ADP + phosphate + H(+). In terms of biological role, part of the ABC transporter complex TauABC involved in taurine import. Responsible for energy coupling to the transport system. The polypeptide is Taurine import ATP-binding protein TauB (Jannaschia sp. (strain CCS1)).